We begin with the raw amino-acid sequence, 498 residues long: ATP synthase subunit beta, chloroplastic (498 aa).

Residue 172-179 (GGAGVGKT) coordinates ATP.

The protein belongs to the ATPase alpha/beta chains family. As to quaternary structure, F-type ATPases have 2 components, CF(1) - the catalytic core - and CF(0) - the membrane proton channel. CF(1) has five subunits: alpha(3), beta(3), gamma(1), delta(1), epsilon(1). CF(0) has four main subunits: a(1), b(1), b'(1) and c(9-12).

The protein localises to the plastid. It localises to the chloroplast thylakoid membrane. It carries out the reaction ATP + H2O + 4 H(+)(in) = ADP + phosphate + 5 H(+)(out). Its function is as follows. Produces ATP from ADP in the presence of a proton gradient across the membrane. The catalytic sites are hosted primarily by the beta subunits. This is ATP synthase subunit beta, chloroplastic from Aristolochia macrophylla (Dutchman's pipe vine).